The following is an 85-amino-acid chain: uncharacterized protein (85 aa).

It localises to the mitochondrion. This is an uncharacterized protein from Paramecium tetraurelia.